A 288-amino-acid polypeptide reads, in one-letter code: Probable chromosome 1-partitioning protein ParB (288 aa).

This sequence belongs to the ParB family.

Functionally, involved in chromosome partition. Localize to both poles of the predivisional cell following completion of DNA replication. Binds to the DNA origin of replication. This chain is Probable chromosome 1-partitioning protein ParB (parB1), found in Deinococcus radiodurans (strain ATCC 13939 / DSM 20539 / JCM 16871 / CCUG 27074 / LMG 4051 / NBRC 15346 / NCIMB 9279 / VKM B-1422 / R1).